The following is a 111-amino-acid chain: Histone H2A-Bbd type 1 (111 aa).

Belongs to the histone H2A family. As to quaternary structure, the nucleosome is a histone octamer containing two molecules each of H2A, H2B, H3 and H4 assembled in one H3-H4 heterotetramer and two H2A-H2B heterodimers. Incorporated into nucleosomes during late spermatogenesis. Interacts with H2BC1/TH2B; preferentially dimerizes with H2BC1/TH2B to form nucleosomes. In terms of tissue distribution, highly expressed in adult testis, mainly in spermatocytes.

It localises to the nucleus. Its subcellular location is the chromosome. Its function is as follows. Atypical histone H2A which replaces conventional H2A during late spermatogenesis and is involved in the replacement of histones to protamine in male germ cells. Core component of nucleosome: nucleosomes wrap and compact DNA into chromatin, limiting DNA accessibility to the cellular machineries which require DNA as a template. Nucleosomes containing H2AB1 only wrap 130 bp of DNA, compared to 147 bp for classical nucleosomes. In condensing spermatids, the heterodimer between H2AB1 and H2BC1/TH2B is loaded onto the nucleosomes and promotes loading of transition proteins (TNP1 and TNP2) onto the nucleosomes. Inclusion of the H2AB1-H2BC1/TH2B dimer into chromatin opens the nucleosomes, releasing the nucleosomal DNA ends and allowing the invasion of nucleosomes by transition proteins (TNP1 and TNP2). Then, transition proteins drive the recruitment and processing of protamines, which are responsible for histone eviction. The sequence is that of Histone H2A-Bbd type 1 (H2ab1) from Mus musculus (Mouse).